A 516-amino-acid chain; its full sequence is Protein BTN1 (516 aa).

8 helical membrane passes run 24 to 44 (LFAAFMIFGLLNNVLYVIILS), 57 to 77 (GVVALFNIFPALITKVVWPLL), 88 to 108 (VGFCTICSWFGIITIALSSSL), 112 to 132 (LLGISLASLSSGMGELTFLQL), 146 to 166 (LGAWSSGTGFAGVAGAGIWWL), 169 to 189 (GLGVKGGLGLSSFLPLFFPIT), 371 to 391 (PAIIQFLVLSLLFLQAKTFFF), and 409 to 429 (SITIVFLLICLEGLCGGSGYV).

The protein belongs to the battenin family.

The protein localises to the vacuole membrane. Functionally, involved in vacuolar transport and vacuole pH homeostasis. Also required for cytokinesis. This Cryptococcus neoformans var. neoformans serotype D (strain JEC21 / ATCC MYA-565) (Filobasidiella neoformans) protein is Protein BTN1 (BTN1).